A 172-amino-acid polypeptide reads, in one-letter code: Adenine phosphoribosyltransferase (172 aa).

It belongs to the purine/pyrimidine phosphoribosyltransferase family. Homodimer.

It is found in the cytoplasm. The catalysed reaction is AMP + diphosphate = 5-phospho-alpha-D-ribose 1-diphosphate + adenine. Its pathway is purine metabolism; AMP biosynthesis via salvage pathway; AMP from adenine: step 1/1. Catalyzes a salvage reaction resulting in the formation of AMP, that is energically less costly than de novo synthesis. This is Adenine phosphoribosyltransferase from Staphylococcus aureus (strain Mu3 / ATCC 700698).